Reading from the N-terminus, the 115-residue chain is MKFVLLFGVFLVTLFSYSSAEMLDDFGQADEDELLSLIEKEEARAKECTPRFYDCSHDRHSCCRSELFKDVCTCFYPEGGDNEVCTCQQPKHLKYMEKAADKAKKFGGKIKKWFG.

The N-terminal stretch at 1-20 is a signal peptide; the sequence is MKFVLLFGVFLVTLFSYSSA. Residues 21-44 constitute a propeptide that is removed on maturation; the sequence is EMLDDFGQADEDELLSLIEKEEAR. Cystine bridges form between Cys-48-Cys-63, Cys-55-Cys-72, Cys-62-Cys-87, and Cys-74-Cys-85.

It belongs to the neurotoxin 19 (CSTX) family. 01 subfamily. As to expression, expressed by the venom gland.

The protein localises to the secreted. In Lycosa singoriensis (Wolf spider), this protein is U3-lycotoxin-Ls1a.